We begin with the raw amino-acid sequence, 379 residues long: Anomalous homeobox protein (379 aa).

A DNA-binding region (homeobox) is located at residues 135–196 (PEGLKSRNFP…NYRRRQRALP (62 aa)). The tract at residues 195-283 (LPQHMKPAQQ…SKPLDVSGHP (89 aa)) is disordered. The span at 237–246 (QWSEEREEKG) shows a compositional bias: basic and acidic residues.

It localises to the nucleus. This Homo sapiens (Human) protein is Anomalous homeobox protein (ANHX).